The chain runs to 143 residues: Nucleoside diphosphate kinase (143 aa).

ATP-binding residues include Lys11, Phe59, Arg87, Thr93, Arg104, and Asn114. His117 acts as the Pros-phosphohistidine intermediate in catalysis.

Belongs to the NDK family. In terms of assembly, homotetramer. Mg(2+) is required as a cofactor.

It is found in the cytoplasm. The enzyme catalyses a 2'-deoxyribonucleoside 5'-diphosphate + ATP = a 2'-deoxyribonucleoside 5'-triphosphate + ADP. It catalyses the reaction a ribonucleoside 5'-diphosphate + ATP = a ribonucleoside 5'-triphosphate + ADP. Its function is as follows. Major role in the synthesis of nucleoside triphosphates other than ATP. The ATP gamma phosphate is transferred to the NDP beta phosphate via a ping-pong mechanism, using a phosphorylated active-site intermediate. This is Nucleoside diphosphate kinase from Shewanella denitrificans (strain OS217 / ATCC BAA-1090 / DSM 15013).